Here is a 363-residue protein sequence, read N- to C-terminus: 3-dehydroquinate synthase (363 aa).

NAD(+) contacts are provided by residues 72-77 (SGEKEK), 130-131 (TT), K142, and K151. Positions 184, 247, and 264 each coordinate Zn(2+).

This sequence belongs to the sugar phosphate cyclases superfamily. Dehydroquinate synthase family. Requires Co(2+) as cofactor. Zn(2+) is required as a cofactor. It depends on NAD(+) as a cofactor.

It localises to the cytoplasm. The enzyme catalyses 7-phospho-2-dehydro-3-deoxy-D-arabino-heptonate = 3-dehydroquinate + phosphate. The protein operates within metabolic intermediate biosynthesis; chorismate biosynthesis; chorismate from D-erythrose 4-phosphate and phosphoenolpyruvate: step 2/7. Functionally, catalyzes the conversion of 3-deoxy-D-arabino-heptulosonate 7-phosphate (DAHP) to dehydroquinate (DHQ). The polypeptide is 3-dehydroquinate synthase (Bacillus thuringiensis subsp. konkukian (strain 97-27)).